We begin with the raw amino-acid sequence, 160 residues long: SUMO-conjugating enzyme SCE1 (160 aa).

Position 2 is an N-acetylalanine (Ala2). The UBC core domain maps to 5–158 (IARGRLAEER…VKLQSKQYPA (154 aa)). Cys94 functions as the Glycyl thioester intermediate in the catalytic mechanism.

This sequence belongs to the ubiquitin-conjugating enzyme family. In terms of assembly, interacts with SIZ1 (via PHD domain) and MMS21. Interacts with TCP14 and TCP15. Interacts with KIN10.

The protein operates within protein modification; protein sumoylation. In terms of biological role, SUMO-conjugating enzyme that accepts the SUMO proteins from the E1 SUMO-activating heterodimer SAE1/SAE2 and catalyzes its covalent attachment to other proteins with the E3 SUMO ligases SIZ1 and MMS21. Associates with SIZ1 for sumoylation of the transcription factor GTE3. The protein is SUMO-conjugating enzyme SCE1 (SCE1) of Arabidopsis thaliana (Mouse-ear cress).